Consider the following 400-residue polypeptide: Argininosuccinate synthase (400 aa).

ATP is bound by residues 10 to 18 (AYSGGVDTS) and Ala-38. Tyr-89 contacts L-citrulline. Gly-119 provides a ligand contact to ATP. L-aspartate contacts are provided by Thr-121, Asn-125, and Asp-126. An L-citrulline-binding site is contributed by Asn-125. Positions 129, 177, 186, 262, and 274 each coordinate L-citrulline.

This sequence belongs to the argininosuccinate synthase family. Type 1 subfamily. In terms of assembly, homotetramer.

Its subcellular location is the cytoplasm. It carries out the reaction L-citrulline + L-aspartate + ATP = 2-(N(omega)-L-arginino)succinate + AMP + diphosphate + H(+). It participates in amino-acid biosynthesis; L-arginine biosynthesis; L-arginine from L-ornithine and carbamoyl phosphate: step 2/3. In Crocosphaera subtropica (strain ATCC 51142 / BH68) (Cyanothece sp. (strain ATCC 51142)), this protein is Argininosuccinate synthase.